The chain runs to 380 residues: Transcription factor SOX-7 (380 aa).

Residues 24-43 (SDGLSPPAVPRPSGDKSSES) form a disordered region. Residues 45–113 (IRRPMNAFMV…QHMQDYPNYK (69 aa)) constitute a DNA-binding region (HMG box). The tract at residues 139-167 (SRDQNTLPEKNGIGRGEKEDRGEYSPGAT) is disordered. The Sox C-terminal domain maps to 260–380 (VSMMSSVSGC…ATYYNSYSVS (121 aa)). A required for beta-catenin-binding region spans residues 323–328 (EFDQYL).

Interacts with CTNNB1/beta-catenin; this interaction may lead to the proteasomal degradation of active CTNNB1 and thus inhibition of Wnt/beta-catenin-stimulated transcription. As to expression, predominantly expressed in ovary, lung and heart. In the ovary, restricted to oocytes (at protein level). Present both in mesenchymal and epithelial cells in some adult tissues, including ear.

The protein resides in the nucleus. It is found in the cytoplasm. Its function is as follows. Binds to and activates the CDH5 promoter, hence plays a role in the transcriptional regulation of genes expressed in the hemogenic endothelium and blocks further differentiation into blood precursors. May be required for the survival of both hematopoietic and endothelial precursors during specification. May play a role in skeletal myogenesis and up-regulate the expression of muscle markers, such as PAX3/PAX7 and Meox1. Competes with GATA4 for binding and activation of the FGF3 promoter. Represses Wnt/beta-catenin-stimulated transcription. Probably acts by targeting CTNNB1 to proteasomal degradation. Binds the DNA sequence 5'-AACAAT-3'. The chain is Transcription factor SOX-7 (Sox7) from Mus musculus (Mouse).